Consider the following 708-residue polypeptide: Nicastrin (708 aa).

An N-terminal signal peptide occupies residues 1 to 27 (MATTRGGSGPDPGSRGLLLLSFSVVLA). Over 28-668 (GLCGGNSVER…IFLIASKELE (641 aa)) the chain is Lumenal. N-linked (GlcNAc...) asparagine glycans are attached at residues Asn44, Asn54, and Asn128. An intrachain disulfide couples Cys49 to Cys61. Cysteines 139 and 158 form a disulfide. Asn186 and Asn203 each carry an N-linked (GlcNAc...) asparagine glycan. Intrachain disulfides connect Cys194–Cys212 and Cys229–Cys247. Residues Asn263, Asn386, Asn434, Asn463, Asn505, Asn529, Asn561, Asn572, Asn579, Asn593, and Asn611 are each glycosylated (N-linked (GlcNAc...) asparagine). Cysteines 585 and 619 form a disulfide. Residues 669–689 (FITLIVGFSTLVFSLIVTYCI) form a helical membrane-spanning segment. At 690 to 708 (NAKADVLFVAPREPGAVSY) the chain is on the cytoplasmic side.

It belongs to the nicastrin family. Component of the gamma-secretase complex. The functional gamma-secretase complex is composed of at least four polypeptides: a presenilin homodimer (PSEN1 or PSEN2), nicastrin (NCSTN), APH1 (APH1A or APH1B) and PEN2. Binds to proteolytic processed C-terminal fragments C83 and C99 of the amyloid precursor protein (APP). Interacts with PSEN1 and PSEN2. N-glycosylated.

It localises to the membrane. The protein localises to the cytoplasmic vesicle membrane. It is found in the melanosome. Its function is as follows. Essential subunit of the gamma-secretase complex, an endoprotease complex that catalyzes the intramembrane cleavage of integral membrane proteins such as Notch receptors and APP (amyloid-beta precursor protein). The gamma-secretase complex plays a role in Notch and Wnt signaling cascades and regulation of downstream processes via its role in processing key regulatory proteins, and by regulating cytosolic CTNNB1 levels. This is Nicastrin (Ncstn) from Mus musculus (Mouse).